The sequence spans 283 residues: ATP phosphoribosyltransferase (283 aa).

Belongs to the ATP phosphoribosyltransferase family. Long subfamily. Mg(2+) serves as cofactor.

Its subcellular location is the cytoplasm. It catalyses the reaction 1-(5-phospho-beta-D-ribosyl)-ATP + diphosphate = 5-phospho-alpha-D-ribose 1-diphosphate + ATP. It participates in amino-acid biosynthesis; L-histidine biosynthesis; L-histidine from 5-phospho-alpha-D-ribose 1-diphosphate: step 1/9. With respect to regulation, feedback inhibited by histidine. In terms of biological role, catalyzes the condensation of ATP and 5-phosphoribose 1-diphosphate to form N'-(5'-phosphoribosyl)-ATP (PR-ATP). Has a crucial role in the pathway because the rate of histidine biosynthesis seems to be controlled primarily by regulation of HisG enzymatic activity. The protein is ATP phosphoribosyltransferase of Bacteroides thetaiotaomicron (strain ATCC 29148 / DSM 2079 / JCM 5827 / CCUG 10774 / NCTC 10582 / VPI-5482 / E50).